A 252-amino-acid polypeptide reads, in one-letter code: Protein BTG3 (252 aa).

The segment at 138 to 165 (VTSDYHSGSSSSDEETSKEVEVKPNSVT) is disordered.

The protein belongs to the BTG family.

Functionally, overexpression impairs serum-induced cell cycle progression from the G0/G1 to S phase. In Sus scrofa (Pig), this protein is Protein BTG3 (BTG3).